We begin with the raw amino-acid sequence, 124 residues long: Small ribosomal subunit protein uS13 (124 aa).

The segment at 94 to 124 is disordered; sequence RGMPVRGQRTKTNARTRKGPKRTIAGKKKAR.

The protein belongs to the universal ribosomal protein uS13 family. In terms of assembly, part of the 30S ribosomal subunit. Forms a loose heterodimer with protein S19. Forms two bridges to the 50S subunit in the 70S ribosome.

Its function is as follows. Located at the top of the head of the 30S subunit, it contacts several helices of the 16S rRNA. In the 70S ribosome it contacts the 23S rRNA (bridge B1a) and protein L5 of the 50S subunit (bridge B1b), connecting the 2 subunits; these bridges are implicated in subunit movement. Contacts the tRNAs in the A and P-sites. The protein is Small ribosomal subunit protein uS13 of Mycobacterium tuberculosis (strain ATCC 25177 / H37Ra).